A 335-amino-acid polypeptide reads, in one-letter code: Cathepsin B (335 aa).

A signal peptide spans 1 to 19; that stretch reads MWQLLATLSCLLVLTSARS. Residues 20–79 constitute a propeptide, activation peptide; the sequence is SLHFPPLSDEMVNYVNKQNTTWKAGHNFYNVDLSYVKKLCGAILGGPKLPQRDAFAADMV. Intrachain disulfides connect cysteine 93-cysteine 122, cysteine 105-cysteine 150, cysteine 141-cysteine 207, cysteine 142-cysteine 146, cysteine 179-cysteine 211, and cysteine 187-cysteine 198. The active site involves cysteine 108. N-linked (GlcNAc...) asparagine glycosylation is present at asparagine 192. The residue at position 220 (lysine 220) is an N6-acetyllysine. Residues histidine 278 and asparagine 298 contribute to the active site. Positions 333-335 are excised as a propeptide; it reads HQH.

Belongs to the peptidase C1 family. In terms of assembly, dimer of a heavy chain and a light chain cross-linked by a disulfide bond. Interacts with SRPX2. Directly interacts with SHKBP1.

Its subcellular location is the lysosome. The protein localises to the melanosome. The protein resides in the secreted. It is found in the extracellular space. It localises to the apical cell membrane. It carries out the reaction Hydrolysis of proteins with broad specificity for peptide bonds. Preferentially cleaves -Arg-Arg-|-Xaa bonds in small molecule substrates (thus differing from cathepsin L). In addition to being an endopeptidase, shows peptidyl-dipeptidase activity, liberating C-terminal dipeptides.. Thiol protease which is believed to participate in intracellular degradation and turnover of proteins. Cleaves matrix extracellular phosphoglycoprotein MEPE. Involved in the solubilization of cross-linked TG/thyroglobulin in the thyroid follicle lumen. Has also been implicated in tumor invasion and metastasis. This is Cathepsin B (CTSB) from Ovis aries (Sheep).